A 1358-amino-acid polypeptide reads, in one-letter code: Xanthine dehydrogenase/oxidase (1358 aa).

One can recognise a 2Fe-2S ferredoxin-type domain in the interval 8–95 (DELVFFVNGK…HVAVTTVEGI (88 aa)). [2Fe-2S] cluster is bound by residues cysteine 47, cysteine 52, cysteine 55, cysteine 77, cysteine 117, cysteine 120, cysteine 152, and cysteine 154. The region spanning 255-440 (FKGERVMWIQ…LSVEIPYSKE (186 aa)) is the FAD-binding PCMH-type domain. Residues 283-290 (LVVGNTEV), phenylalanine 363, 373-377 (ALGGN), aspartate 386, leucine 430, and lysine 448 each bind FAD. Glutamine 796 and phenylalanine 827 together coordinate Mo-molybdopterin. The substrate site is built by glutamate 831 and arginine 909. Position 941 (arginine 941) interacts with Mo-molybdopterin. Residues phenylalanine 943 and threonine 1039 each coordinate substrate. A Mo-molybdopterin-binding site is contributed by alanine 1108. The active-site Proton acceptor is glutamate 1290.

This sequence belongs to the xanthine dehydrogenase family. In terms of assembly, homodimer. FAD is required as a cofactor. The cofactor is Mo-molybdopterin. It depends on [2Fe-2S] cluster as a cofactor. As to expression, detected in liver (at protein level).

The protein resides in the peroxisome. It is found in the cytoplasm. It catalyses the reaction xanthine + NAD(+) + H2O = urate + NADH + H(+). The enzyme catalyses hypoxanthine + NAD(+) + H2O = xanthine + NADH + H(+). The catalysed reaction is xanthine + O2 + H2O = urate + H2O2. Its function is as follows. Key enzyme in purine degradation. Catalyzes the oxidation of hypoxanthine to xanthine. Catalyzes the oxidation of xanthine to uric acid. Contributes to the generation of reactive oxygen species. The chain is Xanthine dehydrogenase/oxidase (XDH) from Gallus gallus (Chicken).